Here is a 441-residue protein sequence, read N- to C-terminus: Phosphoglucosamine mutase (441 aa).

Serine 100 functions as the Phosphoserine intermediate in the catalytic mechanism. Serine 100, aspartate 239, aspartate 241, and aspartate 243 together coordinate Mg(2+). Position 100 is a phosphoserine (serine 100).

It belongs to the phosphohexose mutase family. Requires Mg(2+) as cofactor. Activated by phosphorylation.

It catalyses the reaction alpha-D-glucosamine 1-phosphate = D-glucosamine 6-phosphate. Its function is as follows. Catalyzes the conversion of glucosamine-6-phosphate to glucosamine-1-phosphate. In Ruthia magnifica subsp. Calyptogena magnifica, this protein is Phosphoglucosamine mutase.